Reading from the N-terminus, the 118-residue chain is Large ribosomal subunit protein uL24 (118 aa).

This sequence belongs to the universal ribosomal protein uL24 family. As to quaternary structure, part of the 50S ribosomal subunit.

In terms of biological role, one of two assembly initiator proteins, it binds directly to the 5'-end of the 23S rRNA, where it nucleates assembly of the 50S subunit. Functionally, one of the proteins that surrounds the polypeptide exit tunnel on the outside of the subunit. The chain is Large ribosomal subunit protein uL24 from Prochlorococcus marinus (strain SARG / CCMP1375 / SS120).